Reading from the N-terminus, the 285-residue chain is Ribosomal protein L11 methyltransferase (285 aa).

Positions 131, 154, 176, and 223 each coordinate S-adenosyl-L-methionine.

It belongs to the methyltransferase superfamily. PrmA family.

It is found in the cytoplasm. It carries out the reaction L-lysyl-[protein] + 3 S-adenosyl-L-methionine = N(6),N(6),N(6)-trimethyl-L-lysyl-[protein] + 3 S-adenosyl-L-homocysteine + 3 H(+). Methylates ribosomal protein L11. The polypeptide is Ribosomal protein L11 methyltransferase (Brucella abortus (strain S19)).